Reading from the N-terminus, the 306-residue chain is 2-dehydro-3-deoxy-D-gluconate/2-dehydro-3-deoxy-phosphogluconate aldolase (306 aa).

Substrate contacts are provided by residues 61–62 (TT), 148–150 (YNY), and 173–175 (KDT). K173 acts as the Schiff-base intermediate with substrate in catalysis.

This sequence belongs to the DapA family. KDPG aldolase subfamily. Homotetramer; dimer of dimers.

The enzyme catalyses 2-dehydro-3-deoxy-6-phospho-D-gluconate = D-glyceraldehyde 3-phosphate + pyruvate. It catalyses the reaction 2-dehydro-3-deoxy-D-gluconate = D-glyceraldehyde + pyruvate. Its pathway is carbohydrate acid metabolism; 2-dehydro-3-deoxy-D-gluconate degradation; D-glyceraldehyde 3-phosphate and pyruvate from 2-dehydro-3-deoxy-D-gluconate: step 2/2. Its function is as follows. Involved in the degradation of glucose via the Entner-Doudoroff pathway. Catalyzes the reversible cleavage of 2-keto-3-deoxy-6-phosphogluconate (KDPG) and 2-keto-3-deoxygluconate (KDG) forming pyruvate and glyceraldehyde 3-phosphate or glyceraldehyde, respectively. It is not able to use 2-keto-3-deoxy-6-phosphogalactonate (KDPGal) and 2-keto-3-deoxygalactonate (KDGal) as substrate. The protein is 2-dehydro-3-deoxy-D-gluconate/2-dehydro-3-deoxy-phosphogluconate aldolase (kdgA) of Thermoproteus tenax.